The following is a 189-amino-acid chain: Potassium-transporting ATPase KdpC subunit (189 aa).

Residues 6-26 form a helical membrane-spanning segment; that stretch reads PAILLFIMFTIICGGIYPALV.

This sequence belongs to the KdpC family. As to quaternary structure, the system is composed of three essential subunits: KdpA, KdpB and KdpC.

It is found in the cell inner membrane. In terms of biological role, part of the high-affinity ATP-driven potassium transport (or Kdp) system, which catalyzes the hydrolysis of ATP coupled with the electrogenic transport of potassium into the cytoplasm. This subunit acts as a catalytic chaperone that increases the ATP-binding affinity of the ATP-hydrolyzing subunit KdpB by the formation of a transient KdpB/KdpC/ATP ternary complex. The protein is Potassium-transporting ATPase KdpC subunit of Trichlorobacter lovleyi (strain ATCC BAA-1151 / DSM 17278 / SZ) (Geobacter lovleyi).